The sequence spans 37 residues: Delta-amaurobitoxin-Pl1b (37 aa).

4 disulfides stabilise this stretch: Cys-2/Cys-18, Cys-9/Cys-23, Cys-17/Cys-33, and Cys-25/Cys-31. Serine amide is present on Ser-37.

This sequence belongs to the neurotoxin 07 (Beta/delta-agtx) family. 02 (aga-3) subfamily. In terms of tissue distribution, expressed by the venom gland.

Its subcellular location is the secreted. In terms of biological role, insecticidal toxin. Binds to site 4 of insect voltage-gated sodium channel (Nav) and inhibits channel inactivation. In vivo, it lethal to lepidopteran larvae. Has no adverse affects when intracerebroventricularly injected in mice at a dose of 0.2 ug, but causes reversible paralysis of legs when injected intracerebroventricularly in mice at a dose of 2.0 ug. The protein is Delta-amaurobitoxin-Pl1b of Pireneitega luctuosa (Tangled nest spider).